We begin with the raw amino-acid sequence, 195 residues long: Imidazoleglycerol-phosphate dehydratase (195 aa).

The protein belongs to the imidazoleglycerol-phosphate dehydratase family.

The protein localises to the cytoplasm. It catalyses the reaction D-erythro-1-(imidazol-4-yl)glycerol 3-phosphate = 3-(imidazol-4-yl)-2-oxopropyl phosphate + H2O. It participates in amino-acid biosynthesis; L-histidine biosynthesis; L-histidine from 5-phospho-alpha-D-ribose 1-diphosphate: step 6/9. The chain is Imidazoleglycerol-phosphate dehydratase from Koribacter versatilis (strain Ellin345).